The sequence spans 429 residues: Bifunctional protein GlmU (429 aa).

Positions 1–223 are pyrophosphorylase; the sequence is MKTSILILAA…EDEFMGINDK (223 aa). UDP-N-acetyl-alpha-D-glucosamine is bound by residues 8–11, lysine 22, and 81–82; these read LAAG and GT. Aspartate 102 contacts Mg(2+). UDP-N-acetyl-alpha-D-glucosamine contacts are provided by glycine 135, glutamate 149, asparagine 164, and asparagine 221. Asparagine 221 is a binding site for Mg(2+). The linker stretch occupies residues 224–244; it reads FELSIAENFMQEKIKKYWMQQ. The segment at 245–429 is N-acetyltransferase; that stretch reads GVIFHLPQST…KDYYYKKFQK (185 aa). The UDP-N-acetyl-alpha-D-glucosamine site is built by arginine 308 and lysine 325. Catalysis depends on histidine 336, which acts as the Proton acceptor. Tyrosine 339 and asparagine 350 together coordinate UDP-N-acetyl-alpha-D-glucosamine. Residues 359-360, serine 378, alanine 396, and arginine 413 each bind acetyl-CoA; that span reads NY.

The protein in the N-terminal section; belongs to the N-acetylglucosamine-1-phosphate uridyltransferase family. It in the C-terminal section; belongs to the transferase hexapeptide repeat family. Homotrimer. Requires Mg(2+) as cofactor.

It localises to the cytoplasm. It catalyses the reaction alpha-D-glucosamine 1-phosphate + acetyl-CoA = N-acetyl-alpha-D-glucosamine 1-phosphate + CoA + H(+). The enzyme catalyses N-acetyl-alpha-D-glucosamine 1-phosphate + UTP + H(+) = UDP-N-acetyl-alpha-D-glucosamine + diphosphate. Its pathway is nucleotide-sugar biosynthesis; UDP-N-acetyl-alpha-D-glucosamine biosynthesis; N-acetyl-alpha-D-glucosamine 1-phosphate from alpha-D-glucosamine 6-phosphate (route II): step 2/2. It functions in the pathway nucleotide-sugar biosynthesis; UDP-N-acetyl-alpha-D-glucosamine biosynthesis; UDP-N-acetyl-alpha-D-glucosamine from N-acetyl-alpha-D-glucosamine 1-phosphate: step 1/1. It participates in bacterial outer membrane biogenesis; LPS lipid A biosynthesis. In terms of biological role, catalyzes the last two sequential reactions in the de novo biosynthetic pathway for UDP-N-acetylglucosamine (UDP-GlcNAc). The C-terminal domain catalyzes the transfer of acetyl group from acetyl coenzyme A to glucosamine-1-phosphate (GlcN-1-P) to produce N-acetylglucosamine-1-phosphate (GlcNAc-1-P), which is converted into UDP-GlcNAc by the transfer of uridine 5-monophosphate (from uridine 5-triphosphate), a reaction catalyzed by the N-terminal domain. This is Bifunctional protein GlmU from Campylobacter jejuni (strain RM1221).